Here is a 1823-residue protein sequence, read N- to C-terminus: Vitellogenin (1823 aa).

Positions 1–14 (MWKLLLVALAFALA) are cleaved as a signal peptide. A Pyrrolidone carboxylic acid modification is found at Q17. Residues 18-658 (FQPGKVYRYS…SPSGPLPRAV (641 aa)) form the Vitellogenin domain. Residues 953–986 (KGLISQQQQQPHHQQQPHQHGQDQARAAYQRPWA) are disordered. Low complexity predominate over residues 958–976 (QQQQQPHHQQQPHQHGQDQ). N1097 is a glycosylation site (N-linked (GlcNAc...) asparagine). The segment at 1119-1289 (SDKDKDAKKP…SSSSSESKSL (171 aa)) is disordered. Low complexity-rich tracts occupy residues 1128–1149 (PPGSSSSSSSSSSSSSSSSSSD) and 1178–1192 (SSSSSSSSSSSSDSS). Residues 1194 to 1206 (SPHKHGGAKRQHA) are compositionally biased toward basic residues. 2 stretches are compositionally biased toward low complexity: residues 1217–1238 (SHSSSSSSSSSSSSSSASKSFS) and 1253–1286 (SSSSSSSSDSSSSSSSSSSSSSSSSSSSSSSSES). N-linked (GlcNAc...) asparagine glycosylation occurs at N1298. The disordered stretch occupies residues 1308 to 1351 (VPQRKPQTSRRHTPASSSSSSSSSSSSSSSSSSSDSDMTVSAES). Residues 1323–1344 (SSSSSSSSSSSSSSSSSSSDSD) are compositionally biased toward low complexity. Positions 1564-1732 (SACELNEQSL…SWIAPDETCG (169 aa)) constitute a VWFD domain. Intrachain disulfides connect C1566–C1695 and C1589–C1731. N1675 carries N-linked (GlcNAc...) asparagine glycosylation.

In terms of processing, what corresponds to phosvitin in other species is lost during maturation of vitellogenin to lipovitellin. Produced by the liver, secreted into the blood and then sequestered by receptor mediated endocytosis into growing oocytes, where it is generally cleaved, giving rise to the respective yolk components lipovitellins 1 and 2.

In terms of biological role, precursor of the major egg-yolk proteins that are sources of nutrients during early development of oviparous organisms. The protein is Vitellogenin of Ichthyomyzon unicuspis (Silver lamprey).